Here is a 396-residue protein sequence, read N- to C-terminus: Ribosomal RNA large subunit methyltransferase I (396 aa).

The PUA domain occupies 2–79 (AVRIKLKPGR…REEEIDREFF (78 aa)).

This sequence belongs to the methyltransferase superfamily. RlmI family.

It localises to the cytoplasm. The enzyme catalyses cytidine(1962) in 23S rRNA + S-adenosyl-L-methionine = 5-methylcytidine(1962) in 23S rRNA + S-adenosyl-L-homocysteine + H(+). Specifically methylates the cytosine at position 1962 (m5C1962) of 23S rRNA. The sequence is that of Ribosomal RNA large subunit methyltransferase I from Shewanella sp. (strain ANA-3).